The following is a 308-amino-acid chain: Uricase-2 (308 aa).

Catalysis depends on charge relay system residues Lys17 and Thr63. Residues Thr63, Asp64, Phe165, Arg182, Val237, Gln238, and Asn264 each contribute to the urate site. The active-site Charge relay system is His266. The Microbody targeting signal motif lies at Ser306–Leu308.

The protein belongs to the uricase family. Homotetramer. In terms of tissue distribution, expressed predominantly in the uninfected cells of the central tissue of the root nodule. Also expressed in the nodule parenchyma cells and vascular tissue, in the roots, stems and leaves of uninfected adult plants, and in the cotyledons, roots and hypocotyls of developing seedlings. Localized to the metaxylem parenchyma cells and phloem fibers of developing roots.

The protein localises to the peroxisome. The enzyme catalyses urate + O2 + H2O = 5-hydroxyisourate + H2O2. It participates in purine metabolism; urate degradation; (S)-allantoin from urate: step 1/3. Functionally, catalyzes the oxidation of uric acid to 5-hydroxyisourate, which is further processed to form (S)-allantoin. This Phaseolus vulgaris (Kidney bean) protein is Uricase-2 (URIII).